The sequence spans 182 residues: Glycerol-3-phosphate acyltransferase 1 (182 aa).

The next 5 membrane-spanning stretches (helical) occupy residues 5–25 (MQFL…AYIV), 54–74 (GYFI…VAVA), 81–101 (PTFV…PVLF), 117–137 (IAFD…FYLI), and 157–177 (ILYS…VLIL).

It belongs to the PlsY family. As to quaternary structure, probably interacts with PlsX.

Its subcellular location is the cell membrane. The catalysed reaction is an acyl phosphate + sn-glycerol 3-phosphate = a 1-acyl-sn-glycero-3-phosphate + phosphate. Its pathway is lipid metabolism; phospholipid metabolism. Functionally, catalyzes the transfer of an acyl group from acyl-phosphate (acyl-PO(4)) to glycerol-3-phosphate (G3P) to form lysophosphatidic acid (LPA). This enzyme utilizes acyl-phosphate as fatty acyl donor, but not acyl-CoA or acyl-ACP. This Bacillus cereus (strain ATCC 14579 / DSM 31 / CCUG 7414 / JCM 2152 / NBRC 15305 / NCIMB 9373 / NCTC 2599 / NRRL B-3711) protein is Glycerol-3-phosphate acyltransferase 1.